Consider the following 396-residue polypeptide: MNIIIIILYISYIYTYPFSNGKYCNLYNPTTFYKINNILYSIKIYNINNNTNNTNNNNPADSSSYESRMRAAGNSNSNSNSNSDSNINNTNNINNTNNIYNINNNINNNNNINNNYINNSIPCGSYPQGRWTAGSEFYKMLFVGLFDSNGNIQINKYKSKYLQFRLIIKLNNNKENINILNNIKHYLKGNININNNYVIWIINDIKNINNLIKLFNKYPLITINKKLQLAFIKSIYYIYKNNRNLAINLYLKDRNNKYNPNLYKYYKDINYTKINYFSPANFHKKFAGININININNNYNHNYINVWFLGFIENKGKFIIRKNNNNSFLFYINDKHLIEFLKNYFNIKNKLIYKNNIYILEVYNKYYINIFIKFFNKYNLQGYKYIEYIKWKKINI.

The disordered stretch occupies residues 51–90; sequence TNNTNNNNPADSSSYESRMRAAGNSNSNSNSNSDSNINNT. The segment covering 74 to 90 has biased composition (low complexity); the sequence is NSNSNSNSNSDSNINNT.

This sequence belongs to the LAGLIDADG endonuclease family.

Its subcellular location is the mitochondrion. Functionally, mitochondrial DNA endonuclease involved in intron homing. This Kluyveromyces lactis (strain ATCC 8585 / CBS 2359 / DSM 70799 / NBRC 1267 / NRRL Y-1140 / WM37) (Yeast) protein is Probable intron-encoded endonuclease aI3 (aI3).